The following is a 569-amino-acid chain: CTP synthase (569 aa).

An amidoligase domain region spans residues 1 to 272 (MARPKNVKHI…DSRVLKKLGI (272 aa)). Ser18 serves as a coordination point for CTP. UTP is bound at residue Ser18. 19–24 (SLGKGI) is an ATP binding site. Tyr59 provides a ligand contact to L-glutamine. Asp76 is an ATP binding site. Asp76 and Glu146 together coordinate Mg(2+). CTP-binding positions include 153–155 (DIE), 193–198 (KTKPTQ), and Lys229. UTP-binding positions include 193–198 (KTKPTQ) and Lys229. The region spanning 299–543 (TIGICGKYTE…VAAAKDYARG (245 aa)) is the Glutamine amidotransferase type-1 domain. Gly363 lines the L-glutamine pocket. Cys390 functions as the Nucleophile; for glutamine hydrolysis in the catalytic mechanism. Residues 391–394 (LGMQ), Glu414, and Arg471 each bind L-glutamine. Residues His516 and Glu518 contribute to the active site.

This sequence belongs to the CTP synthase family. Homotetramer.

The enzyme catalyses UTP + L-glutamine + ATP + H2O = CTP + L-glutamate + ADP + phosphate + 2 H(+). It catalyses the reaction L-glutamine + H2O = L-glutamate + NH4(+). The catalysed reaction is UTP + NH4(+) + ATP = CTP + ADP + phosphate + 2 H(+). It participates in pyrimidine metabolism; CTP biosynthesis via de novo pathway; CTP from UDP: step 2/2. Its activity is regulated as follows. Allosterically activated by GTP, when glutamine is the substrate; GTP has no effect on the reaction when ammonia is the substrate. The allosteric effector GTP functions by stabilizing the protein conformation that binds the tetrahedral intermediate(s) formed during glutamine hydrolysis. Inhibited by the product CTP, via allosteric rather than competitive inhibition. In terms of biological role, catalyzes the ATP-dependent amination of UTP to CTP with either L-glutamine or ammonia as the source of nitrogen. Regulates intracellular CTP levels through interactions with the four ribonucleotide triphosphates. This Chlorobium chlorochromatii (strain CaD3) protein is CTP synthase.